The primary structure comprises 311 residues: MPETCPNTVTKMRCAVVTGGNKGIGFEICKQLSSSGIMVVLTCRDVTRGLEAVEKLKNSNHENVVFHQLDVTDPITTMSSLADFIKARFGKLDILVNNAGVAGFSVDADRFKAMISDIGEDSEEVVKIYEKPEAQELMSETYELAEECLKINYYGVKSVTEVLLPLLQLSDSPRIVNVSSSTGSLKYVSNETALEILGDGDALTEERIDMVVNMLLKDFKENLIETNGWPSFGAAYTTSKACLNAYTRVLAKKIPKFQVNCVCPGLVKTEMNYGIGNYTADEGAKHVVRIALFPDDGPSGFFYDCSELSAF.

17-40 (VTGGNKGIGFEICKQLSSSGIMVV) is a binding site for NADP(+). Serine 180 contributes to the substrate binding site. The Proton acceptor role is filled by tyrosine 236.

Belongs to the short-chain dehydrogenases/reductases (SDR) family.

It carries out the reaction (7S)-salutaridinol + NADP(+) = salutaridine + NADPH + H(+). Subject to substrate inhibition at salutaridine concentrations higher than 20 to 30 uM. In terms of biological role, involved in biosynthesis of morphinan-type benzylisoquinoline alkaloids. Catalyzes the stereospecific conversion of salutaridine to salutaridinol. The protein is Salutaridine reductase of Papaver bracteatum (Great scarlet poppy).